A 1275-amino-acid chain; its full sequence is Inner capsid protein lambda-1 (1275 aa).

The segment covering 1 to 12 (MKRIPRKTKGKS) has biased composition (basic residues). Residues 1–149 (MKRIPRKTKG…DNEGGSNQKP (149 aa)) form a disordered region. Basic and acidic residues-rich tracts occupy residues 18–35 (DSTE…DKQN) and 75–117 (NNDE…DKSK). Positions 118 to 149 (AQVTYSDTGINNANELSRSGNVDNEGGSNQKP) are enriched in polar residues. The C2H2-type zinc finger occupies 181–203 (YQCHVCSAVLFSPLDLDAHVASH).

It belongs to the orthoreovirus lambda-1 protein family. Homodecamer; each decamer is made up of two conformers of VP2, called VP2A and VP2B. 12 homodecamers assemble to form an icosahedral capsid. Interacts with protein mu-NS; in viral inclusions. The cofactor is Mg(2+). Mn(2+) is required as a cofactor.

It is found in the virion. It carries out the reaction ATP + H2O = ADP + phosphate + H(+). Its function is as follows. Inner capsid protein that self-assembles to form an icosahedral capsid with a T=2 symmetry, which consists of 120 copies of VP2, with channels at each of its five-fold vertices. This capsid constitutes the innermost concentric layer of the viral mature particle. In terms of biological role, displays NTPase, RNA 5'-triphosphatase (RTPase) and RNA helicase activities. Helicase activity might be involved in unwinding or reannealing dsRNA during RNA synthesis. RTPase enzymatic activity represents the first step in RNA capping, which yields a 5'-diphosphorylated plus-strand RNA. The chain is Inner capsid protein lambda-1 (L3) from Reovirus type 3 (strain Dearing) (T3D).